Here is a 392-residue protein sequence, read N- to C-terminus: Phosphoglycerate kinase (392 aa).

Substrate-binding positions include 21–23, Arg-36, 59–62, Arg-113, and Arg-146; these read DLN and HLGR. ATP contacts are provided by residues Lys-197, Glu-319, and 345–348; that span reads GGDT.

The protein belongs to the phosphoglycerate kinase family. In terms of assembly, monomer.

It is found in the cytoplasm. It catalyses the reaction (2R)-3-phosphoglycerate + ATP = (2R)-3-phospho-glyceroyl phosphate + ADP. It functions in the pathway carbohydrate degradation; glycolysis; pyruvate from D-glyceraldehyde 3-phosphate: step 2/5. In Thioalkalivibrio sulfidiphilus (strain HL-EbGR7), this protein is Phosphoglycerate kinase.